The following is a 161-amino-acid chain: E3 ubiquitin ligase complex SCF subunit sconC (161 aa).

An interaction with the F-box domain of F-box proteins region spans residues 103-161 (ILAANYLDIKGLLDVGCKTVANMIKGKSPEEIRKTFNIQNDFTPEEEDQIRRENEWAEE).

This sequence belongs to the SKP1 family. As to quaternary structure, component of the SCF (SKP1-CUL1-F-box protein) E3 ubiquitin ligase complexes.

It participates in protein modification; protein ubiquitination. In terms of biological role, essential component of the SCF (SKP1-CUL1-F-box protein) E3 ubiquitin ligase complexes, which mediate the ubiquitination and subsequent proteasomal degradation of target proteins. Controls sulfur metabolite repression, probably by mediating the inactivation or degradation of the metR transcription factor. This chain is E3 ubiquitin ligase complex SCF subunit sconC (sconC), found in Aspergillus terreus (strain NIH 2624 / FGSC A1156).